Reading from the N-terminus, the 182-residue chain is Large ribosomal subunit protein eL15 (182 aa).

It belongs to the eukaryotic ribosomal protein eL15 family.

The polypeptide is Large ribosomal subunit protein eL15 (rpl15e) (Methanothermobacter thermautotrophicus (strain ATCC 29096 / DSM 1053 / JCM 10044 / NBRC 100330 / Delta H) (Methanobacterium thermoautotrophicum)).